The primary structure comprises 332 residues: Ketol-acid reductoisomerase (NADP(+)) (332 aa).

Residues 2-182 form the KARI N-terminal Rossmann domain; that stretch reads AKVYYDEDAS…GCTRAGLIET (181 aa). NADP(+)-binding positions include 25-28, S51, S53, and 83-86; these read YGSQ and DTIQ. The active site involves H108. An NADP(+)-binding site is contributed by G134. The KARI C-terminal knotted domain maps to 183 to 327; that stretch reads TFKEETETDL…KELRKMMPWL (145 aa). Mg(2+)-binding residues include D191, E195, E227, and E231. Residue S252 coordinates substrate.

The protein belongs to the ketol-acid reductoisomerase family. Requires Mg(2+) as cofactor.

The catalysed reaction is (2R)-2,3-dihydroxy-3-methylbutanoate + NADP(+) = (2S)-2-acetolactate + NADPH + H(+). It catalyses the reaction (2R,3R)-2,3-dihydroxy-3-methylpentanoate + NADP(+) = (S)-2-ethyl-2-hydroxy-3-oxobutanoate + NADPH + H(+). It participates in amino-acid biosynthesis; L-isoleucine biosynthesis; L-isoleucine from 2-oxobutanoate: step 2/4. Its pathway is amino-acid biosynthesis; L-valine biosynthesis; L-valine from pyruvate: step 2/4. Functionally, involved in the biosynthesis of branched-chain amino acids (BCAA). Catalyzes an alkyl-migration followed by a ketol-acid reduction of (S)-2-acetolactate (S2AL) to yield (R)-2,3-dihydroxy-isovalerate. In the isomerase reaction, S2AL is rearranged via a Mg-dependent methyl migration to produce 3-hydroxy-3-methyl-2-ketobutyrate (HMKB). In the reductase reaction, this 2-ketoacid undergoes a metal-dependent reduction by NADPH to yield (R)-2,3-dihydroxy-isovalerate. This is Ketol-acid reductoisomerase (NADP(+)) from Persephonella marina (strain DSM 14350 / EX-H1).